The primary structure comprises 474 residues: ATP synthase subunit beta (474 aa).

151-158 (GGAGVGKT) serves as a coordination point for ATP.

Belongs to the ATPase alpha/beta chains family. In terms of assembly, F-type ATPases have 2 components, CF(1) - the catalytic core - and CF(0) - the membrane proton channel. CF(1) has five subunits: alpha(3), beta(3), gamma(1), delta(1), epsilon(1). CF(0) has three main subunits: a(1), b(2) and c(9-12). The alpha and beta chains form an alternating ring which encloses part of the gamma chain. CF(1) is attached to CF(0) by a central stalk formed by the gamma and epsilon chains, while a peripheral stalk is formed by the delta and b chains.

Its subcellular location is the cell inner membrane. The enzyme catalyses ATP + H2O + 4 H(+)(in) = ADP + phosphate + 5 H(+)(out). Functionally, produces ATP from ADP in the presence of a proton gradient across the membrane. The catalytic sites are hosted primarily by the beta subunits. This Ruegeria sp. (strain TM1040) (Silicibacter sp.) protein is ATP synthase subunit beta.